The sequence spans 796 residues: Probable coatomer subunit beta' (796 aa).

6 WD repeats span residues 4-42 (LDFQRKLLSHTERVKAVDFHPTEPWVIASHYNGQVGIWN), 46-84 (QTLVRSFDINDVPIRACAFIARKNWFVCGSDDFQVRVYN), 88-126 (GEKVTQFEAHPDYIRALVVHPTQPFLLTSSDDMTIKCFN), 131-170 (WKCVQTFEGHSRYVMSLAINPKDTNTFASSCLDGTVKVWS), 172-214 (GSSV…KVWD), and 218-256 (KACVRILEGHTNNVSFAFFHSKFPIIISGSEDGTVKIWH).

It belongs to the WD repeat COPB2 family. As to quaternary structure, oligomeric complex that consists of at least the alpha, beta, beta', gamma, delta, epsilon and zeta subunits.

Its subcellular location is the cytoplasm. It is found in the golgi apparatus membrane. It localises to the cytoplasmic vesicle. The protein resides in the COPI-coated vesicle membrane. Functionally, the coatomer is a cytosolic protein complex that binds to dilysine motifs and reversibly associates with Golgi non-clathrin-coated vesicles, which further mediate biosynthetic protein transport from the ER, via the Golgi up to the trans Golgi network. Coatomer complex is required for budding from Golgi membranes, and is essential for the retrograde Golgi-to-ER transport of dilysine-tagged proteins. The sequence is that of Probable coatomer subunit beta' (sec27) from Schizosaccharomyces pombe (strain 972 / ATCC 24843) (Fission yeast).